We begin with the raw amino-acid sequence, 113 residues long: uncharacterized protein (113 aa).

A helical transmembrane segment spans residues 7 to 29; the sequence is FFILIVLLFTVFSLKEFIPNTFC.

The protein resides in the membrane. This is an uncharacterized protein from Aquifex aeolicus (strain VF5).